Consider the following 263-residue polypeptide: uncharacterized protein (263 aa).

The first 22 residues, 1 to 22, serve as a signal peptide directing secretion; it reads MEYLKRLALFISVIILTIFIMG. The N-palmitoyl cysteine moiety is linked to residue Cys-23. Cys-23 is lipidated: S-diacylglycerol cysteine.

It belongs to the staphylococcal tandem lipoprotein family.

The protein resides in the cell membrane. This is an uncharacterized protein from Staphylococcus aureus (strain MSSA476).